We begin with the raw amino-acid sequence, 375 residues long: Chaperone protein DnaJ (375 aa).

The region spanning 5–70 (DYYDVLGVNR…QKRGAYDQFG (66 aa)) is the J domain. The segment at 135-213 (GCEKQIRIPS…CHGAGQKKTT (79 aa)) adopts a CR-type zinc-finger fold. Zn(2+)-binding residues include Cys148, Cys151, Cys165, Cys168, Cys187, Cys190, Cys201, and Cys204. CXXCXGXG motif repeat units follow at residues 148–155 (CSTCNGTG), 165–172 (CATCGGHG), 187–194 (CPTCHGTG), and 201–208 (CGSCHGAG).

This sequence belongs to the DnaJ family. Homodimer. Requires Zn(2+) as cofactor.

It is found in the cytoplasm. Functionally, participates actively in the response to hyperosmotic and heat shock by preventing the aggregation of stress-denatured proteins and by disaggregating proteins, also in an autonomous, DnaK-independent fashion. Unfolded proteins bind initially to DnaJ; upon interaction with the DnaJ-bound protein, DnaK hydrolyzes its bound ATP, resulting in the formation of a stable complex. GrpE releases ADP from DnaK; ATP binding to DnaK triggers the release of the substrate protein, thus completing the reaction cycle. Several rounds of ATP-dependent interactions between DnaJ, DnaK and GrpE are required for fully efficient folding. Also involved, together with DnaK and GrpE, in the DNA replication of plasmids through activation of initiation proteins. The sequence is that of Chaperone protein DnaJ from Chromobacterium violaceum (strain ATCC 12472 / DSM 30191 / JCM 1249 / CCUG 213 / NBRC 12614 / NCIMB 9131 / NCTC 9757 / MK).